The sequence spans 407 residues: Proline-rich P65 protein (407 aa).

The segment at 1–50 is disordered; the sequence is MDINKPGWNQSDQQATAYDPNQQQYYGDGSTYYDPDQAVDPNQAYYPDPN. Residues 7–25 are compositionally biased toward polar residues; that stretch reads GWNQSDQQATAYDPNQQQY. A run of 12 repeats spans residues 40-45, 75-80, 83-87, 89-93, 95-99, 101-105, 107-111, 119-123, 140-145, 150-154, 156-160, and 170-174. The segment at 40–174 is 12 X 5 AA repeats of D-P-N-Q-A-Y; that stretch reads DPNQAYYPDP…YVTSTDHNAY (135 aa).

In terms of processing, the N-terminus is blocked.

Its subcellular location is the cell membrane. The polypeptide is Proline-rich P65 protein (p65) (Mycoplasmoides pneumoniae (strain ATCC 15531 / DSM 23978 / CIP 103766 / NBRC 14401 / NCTC 10119 / FH) (Mycoplasma pneumoniae)).